Consider the following 409-residue polypeptide: NADH-quinone oxidoreductase subunit D (409 aa).

This sequence belongs to the complex I 49 kDa subunit family. In terms of assembly, NDH-1 is composed of 14 different subunits. Subunits NuoB, C, D, E, F, and G constitute the peripheral sector of the complex.

Its subcellular location is the cell inner membrane. The catalysed reaction is a quinone + NADH + 5 H(+)(in) = a quinol + NAD(+) + 4 H(+)(out). Functionally, NDH-1 shuttles electrons from NADH, via FMN and iron-sulfur (Fe-S) centers, to quinones in the respiratory chain. The immediate electron acceptor for the enzyme in this species is believed to be ubiquinone. Couples the redox reaction to proton translocation (for every two electrons transferred, four hydrogen ions are translocated across the cytoplasmic membrane), and thus conserves the redox energy in a proton gradient. The sequence is that of NADH-quinone oxidoreductase subunit D from Helicobacter pylori (strain Shi470).